Here is a 975-residue protein sequence, read N- to C-terminus: MKLEHPDRLMNRTPLSLAALETHDAFAERHIGPDAASQQAMLDTLGFATRAALIDAVIPASIRRAETLPLGPFAQPKSEAEALAALRALADKNQVFRSYIGQGYYDTHTPAVILRNVLENPAWYTAYTPYQPEISQGRLEALLNFQQMVADLTGLEISNASLLDEATAAAEAMTLLQRVGKPQSNVFYVADDVLPQTLEVIKTRAKPIGIEVKSGPAADAAAANAFGVLLQYPGANGDVRDYRALADAIHAAGGHVVVAADILALTVLMPPGEWGADVAVGNTQRFGVPMGFGGPHAAYMAVRDEFKRQMPGRLVGVTVDAQGKPALRLALQTREQHIRREKATSNVCTAQALLAIMASMYAVYHGPRGLKTIALRVNRIAALLAAGIRHLGYATVNDTFFDTLTIDTGARTAQLHAFAQAKRINLRRAGDTRVGVSVDETTTRADLADLLTIFAQAAGATAPDIDALDAGLLPAPALPPSLERTSAYLTHHVFNRHHSETEMLRYLRSLSDKDLALDRSMIPLGSCTMKLNATSEMLPVTWPEFGRIHPFAPAEQTVGYREMIDQLEQMLVAATGYAAVSLQPNAGSQGEYAGLLIIHAYHESRGESHRDVCLIPASAHGTNPASAHMAGMKVVVVACDAQGNVDIADLKAKADAHSHDLAAIMITYPSTHGVFEQNVREICEIVHAHGGQVYVDGANMNAMVGLTAPGQFGGDVSHLNLHKTFCIPHGGGGPGVGPVAVGPHLAKFLPNQRSTGYARGEDGIGAVSAAPYGSASILPISWMYIAMMGAKNLTAATETAILNANYIAKRLAPHYPVLYSGPGGLVAHECILDLRPIKDSSGITVDDVAKRLMDYGFHAPTMSFPVPGTLMVEPTESESQEELDRFIAAMIAIRDEIRAVEEGRADREDNPLRHAPHTAAVVTANEWPHAYSREQAAFPVASLVANKYWPPVGRADNAYGDRNLFCSCVPVSDYA.

An N6-(pyridoxal phosphate)lysine modification is found at Lys723.

The protein belongs to the GcvP family. The glycine cleavage system is composed of four proteins: P, T, L and H. Pyridoxal 5'-phosphate serves as cofactor.

The enzyme catalyses N(6)-[(R)-lipoyl]-L-lysyl-[glycine-cleavage complex H protein] + glycine + H(+) = N(6)-[(R)-S(8)-aminomethyldihydrolipoyl]-L-lysyl-[glycine-cleavage complex H protein] + CO2. In terms of biological role, the glycine cleavage system catalyzes the degradation of glycine. The P protein binds the alpha-amino group of glycine through its pyridoxal phosphate cofactor; CO(2) is released and the remaining methylamine moiety is then transferred to the lipoamide cofactor of the H protein. In Burkholderia mallei (strain NCTC 10247), this protein is Glycine dehydrogenase (decarboxylating).